The chain runs to 1843 residues: Protein TIC 214 (1843 aa).

6 helical membrane-spanning segments follow: residues 18 to 38 (IINS…FSIG), 64 to 84 (FITG…HLAL), 87 to 107 (PHTI…WNNH), 124 to 144 (LSIQ…HFIL), 172 to 192 (VGWL…LFWI), and 217 to 237 (IFSI…PSPI). Disordered stretches follow at residues 244 to 281 (ETSK…AAEK), 557 to 576 (EEIE…SRKA), 582 to 647 (FTDN…DEVA), 724 to 744 (NSEE…RQEN), and 1527 to 1586 (SLEL…KKKK). Residues 251–264 (REESEEETDVEIET) are compositionally biased toward acidic residues. Basic and acidic residues predominate over residues 269–281 (KGTKQEQEGAAEK). Residues 590-639 (NTPTSTTETTSTAETTSTTETTSTTKNTSTTKNTSTTETTSTTENENTSN) show a composition bias toward low complexity. Basic and acidic residues-rich tracts occupy residues 730-744 (TKEK…RQEN) and 1527-1540 (SLEL…KKPA). Positions 1543 to 1562 (NIGSDTQKQGNPGSDPSTQQ) are enriched in polar residues. Positions 1563 to 1580 (KDIKKNVKEDYDGRSDIQ) are enriched in basic and acidic residues.

This sequence belongs to the TIC214 family. As to quaternary structure, part of the Tic complex.

Its subcellular location is the plastid. It is found in the chloroplast inner membrane. Involved in protein precursor import into chloroplasts. May be part of an intermediate translocation complex acting as a protein-conducting channel at the inner envelope. This chain is Protein TIC 214, found in Nandina domestica (Heavenly bamboo).